The chain runs to 192 residues: Large ribosomal subunit protein bL25 (192 aa).

The protein belongs to the bacterial ribosomal protein bL25 family. CTC subfamily. Part of the 50S ribosomal subunit; part of the 5S rRNA/L5/L18/L25 subcomplex. Contacts the 5S rRNA. Binds to the 5S rRNA independently of L5 and L18.

Functionally, this is one of the proteins that binds to the 5S RNA in the ribosome where it forms part of the central protuberance. The polypeptide is Large ribosomal subunit protein bL25 (Porphyromonas gingivalis (strain ATCC 33277 / DSM 20709 / CIP 103683 / JCM 12257 / NCTC 11834 / 2561)).